Consider the following 194-residue polypeptide: Fe/S biogenesis protein NfuA (194 aa).

Residues cysteine 152 and cysteine 155 each contribute to the [4Fe-4S] cluster site.

Belongs to the NfuA family. Homodimer. [4Fe-4S] cluster serves as cofactor.

Involved in iron-sulfur cluster biogenesis. Binds a 4Fe-4S cluster, can transfer this cluster to apoproteins, and thereby intervenes in the maturation of Fe/S proteins. Could also act as a scaffold/chaperone for damaged Fe/S proteins. This chain is Fe/S biogenesis protein NfuA, found in Pseudomonas fluorescens (strain Pf0-1).